The following is a 152-amino-acid chain: Aspartate carbamoyltransferase regulatory chain (152 aa).

Residues C108, C113, C136, and C139 each coordinate Zn(2+).

Belongs to the PyrI family. As to quaternary structure, contains catalytic and regulatory chains. Zn(2+) serves as cofactor.

Functionally, involved in allosteric regulation of aspartate carbamoyltransferase. In Thermococcus kodakarensis (strain ATCC BAA-918 / JCM 12380 / KOD1) (Pyrococcus kodakaraensis (strain KOD1)), this protein is Aspartate carbamoyltransferase regulatory chain.